Reading from the N-terminus, the 41-residue chain is Ornatin-A2 (41 aa).

A Cell attachment site motif is present at residues Arg-33–Asp-35.

This sequence belongs to the ornatin family.

It is found in the secreted. Its function is as follows. Potent inhibitor of fibrinogen interaction with platelet receptors expressed on glycoprotein IIb-IIIa complex. May prevent blood from clotting during either feeding and/or storage of ingested blood. In Placobdella ornata (Turtle leech), this protein is Ornatin-A2.